The chain runs to 618 residues: Matrix metalloproteinase-24 (618 aa).

The N-terminal stretch at 1 to 41 (MPRSRGGRAAPGQASRWSGWRAPGRLLPLLPALCCLAAAAG) is a signal peptide. Residues 42 to 128 (AGKPAGADAP…HLSRRRRNKR (87 aa)) constitute a propeptide that is removed on maturation. Topologically, residues 42–575 (AGKPAGADAP…IDDVPGSVNA (534 aa)) are extracellular. The Cysteine switch signature appears at 110-117 (PRCGVPDH). Zn(2+)-binding residues include Cys112 and His255. Glu256 is an active-site residue. Zn(2+)-binding residues include His259 and His265. Residues 296–352 (QKIYGPPAEPLEPTRPLPTLPVRRIHSPSERKHERHPRPPRPPLGDRPSTPGAKPNI) are disordered. Residues 302–314 (PAEPLEPTRPLPT) are compositionally biased toward pro residues. 4 Hemopexin repeats span residues 350–398 (PNIC…WKGL), 399–444 (PARI…GSCL), 446–494 (REGI…KGIP), and 495–542 (QAPQ…WMGC). Cys353 and Cys542 form a disulfide bridge. The helical transmembrane segment at 576–596 (VAVVVPCTLSLCLLVLLYTIF) threads the bilayer. The Cytoplasmic portion of the chain corresponds to 597–618 (QFKNKAGPQPVTYYKRPVQEWV). The PDZ-binding motif lies at 616–618 (EWV).

This sequence belongs to the peptidase M10A family. In terms of assembly, interacts with GRIP1 and GRIP2. Interacts (via PDZ-binding motif) with APBA3 (via PDZ domain). It depends on Zn(2+) as a cofactor. Ca(2+) serves as cofactor. Cleaved by a furin endopeptidase in the trans-Golgi network. In terms of tissue distribution, mainly expressed in neuronal cells of both central and peripheral nervous systems. Expressed by CGRP-containing peptidergic nociceptors in dorsal root ganglia. Expressed in adult neural stem cell and ependymocytes. Expressed at low level in testis.

Its subcellular location is the cell membrane. The protein localises to the golgi apparatus. It is found in the trans-Golgi network membrane. The protein resides in the secreted. It localises to the extracellular space. Its subcellular location is the extracellular matrix. Functionally, metalloprotease that mediates cleavage of N-cadherin (CDH2) and acts as a regulator of neuro-immune interactions and neural stem cell quiescence. Involved in cell-cell interactions between nociceptive neurites and mast cells, possibly by mediating cleavage of CDH2, thereby acting as a mediator of peripheral thermal nociception and inflammatory hyperalgesia. Key regulator of neural stem cells quiescence by mediating cleavage of CDH2, affecting CDH2-mediated anchorage of neural stem cells to ependymocytes in the adult subependymal zone, leading to modulate their quiescence. May play a role in axonal growth. Able to activate progelatinase A. May also be a proteoglycanase involved in degradation of proteoglycans, such as dermatan sulfate and chondroitin sulfate proteoglycans. Cleaves partially fibronectin, but not collagen type I, nor laminin. This chain is Matrix metalloproteinase-24 (Mmp24), found in Mus musculus (Mouse).